The chain runs to 236 residues: Small ribosomal subunit protein uS3 (236 aa).

The region spanning 39–107 (VREFLKKSLS…PAQISITEIK (69 aa)) is the KH type-2 domain.

This sequence belongs to the universal ribosomal protein uS3 family. In terms of assembly, part of the 30S ribosomal subunit. Forms a tight complex with proteins S10 and S14.

In terms of biological role, binds the lower part of the 30S subunit head. Binds mRNA in the 70S ribosome, positioning it for translation. The polypeptide is Small ribosomal subunit protein uS3 (Wigglesworthia glossinidia brevipalpis).